The sequence spans 232 residues: MQTRLTAILAAFLTAVALLAGCSKSEESTATDLPDAATLLQQSAETTRGESSVHLLLRTTGELEELPIHSLEGDLTNTPAVAAEGKTTVTVMGQKVEDMPFVVADGDLYAALFGDAISLIGPAADIYDVGAILDPERGLANVLSNFSDAKSVDREKVNDVETVKITGKVSADAVNRIAPQLAVQDAVGGTAWIADGGDHELVQVQLEPRDGVTVTMTLSDWGKPVTVTKPAA.

An N-terminal signal peptide occupies residues 1 to 21; it reads MQTRLTAILAAFLTAVALLAG. The N-palmitoyl cysteine moiety is linked to residue Cys22. Cys22 carries S-diacylglycerol cysteine lipidation.

It belongs to the LppX/LprAFG lipoprotein family. In terms of processing, modified by Lgt on Cys-22 with an S-linked diacylglyceral, signal peptide is removed by LspA, Cys-22 is further modifed with a fatty acid on its amino group by Lnt yielding a triacylated protein.

Its subcellular location is the cell inner membrane. In terms of biological role, helps membrane protein MHAS_02168/C731_2106 (P55) transport triacylglycerides (TAG) across the inner cell membrane into the periplasm and probably ultimately to the outer membrane. Binds TAG in its hydrophobic cavity and transfers it between lipid bilayers. TAG probably regulates lipid metabolism and growth regulation and plays a structural role in the outer membrane. Also binds mannosides, lipoarabinomannan and lipomannan and various glycolipids in the same cavity. The lprG-MHAS_02167/C731_2107 operon complements the vancomycin sensitivity of an M.smegmatis knockout of the same operon. The chain is Lipoarabinomannan carrier protein LprG from Mycolicibacterium hassiacum (strain DSM 44199 / CIP 105218 / JCM 12690 / 3849) (Mycobacterium hassiacum).